Reading from the N-terminus, the 256-residue chain is MTSSERMAKVVLVDIEGTTTSISFVHDILFPYAKQNVEKFLRNSWEEDDIQHIVQDLQQVPQFADYKALLSAPPAEVDFELIAGFVRYLIDQDLKVTPMKTLQGLIWAQGYTNGELKGHVYEDVPTAFKAWRAAGLQIAVYSSGSVAAQKLIFGHSLVGNLQPYLSAYFDTHVGHKQEQQSYETIAKLLKEDPKHILFLTDIPGEAAAARSAGLQAIILQRPGNAALADDQKASFELIPDFKPLQNLKLPLNKYQA.

Mg(2+)-binding residues include D14 and E16. Residues 142-143 (SS) and K176 each bind substrate. D201 lines the Mg(2+) pocket.

It belongs to the HAD-like hydrolase superfamily. MasA/MtnC family. Monomer. Mg(2+) is required as a cofactor.

It localises to the cytoplasm. The protein localises to the nucleus. It carries out the reaction 5-methylsulfanyl-2,3-dioxopentyl phosphate + H2O = 1,2-dihydroxy-5-(methylsulfanyl)pent-1-en-3-one + phosphate. It functions in the pathway amino-acid biosynthesis; L-methionine biosynthesis via salvage pathway; L-methionine from S-methyl-5-thio-alpha-D-ribose 1-phosphate: step 3/6. Its pathway is amino-acid biosynthesis; L-methionine biosynthesis via salvage pathway; L-methionine from S-methyl-5-thio-alpha-D-ribose 1-phosphate: step 4/6. Functionally, bifunctional enzyme that catalyzes the enolization of 2,3-diketo-5-methylthiopentyl-1-phosphate (DK-MTP-1-P) into the intermediate 2-hydroxy-3-keto-5-methylthiopentenyl-1-phosphate (HK-MTPenyl-1-P), which is then dephosphorylated to form the acireductone 1,2-dihydroxy-3-keto-5-methylthiopentene (DHK-MTPene). The sequence is that of Enolase-phosphatase E1 from Drosophila erecta (Fruit fly).